The following is a 90-amino-acid chain: MSKARVYADVNVLRPKEYWDYEALTVQWGEQDDYEVVRKVGRGKYSEVFEGINVNNNEKCIIKILKPVKKKKIKREIKILQNLCGGPNIV.

ATP-binding positions include 40 to 48 and lysine 63; that span reads VGRGKYSEV.

The protein belongs to the protein kinase superfamily. Ser/Thr protein kinase family. CK2 subfamily.

In terms of biological role, the Nipponbare allele of HD6 contains a premature stop codon, resulting in a truncated non-functional product. The polypeptide is Inactive casein kinase II subunit alpha-2 (Oryza sativa subsp. japonica (Rice)).